The following is a 272-amino-acid chain: uncharacterized protein (272 aa).

Catalysis depends on residues D71 and E163.

It belongs to the glycosyl hydrolase 25 family.

This is an uncharacterized protein from Escherichia coli O6:H1 (strain CFT073 / ATCC 700928 / UPEC).